Consider the following 285-residue polypeptide: Bifunctional protein FolD (285 aa).

NADP(+) contacts are provided by residues 165–167 (GRS) and S190.

This sequence belongs to the tetrahydrofolate dehydrogenase/cyclohydrolase family. In terms of assembly, homodimer.

It carries out the reaction (6R)-5,10-methylene-5,6,7,8-tetrahydrofolate + NADP(+) = (6R)-5,10-methenyltetrahydrofolate + NADPH. The catalysed reaction is (6R)-5,10-methenyltetrahydrofolate + H2O = (6R)-10-formyltetrahydrofolate + H(+). It participates in one-carbon metabolism; tetrahydrofolate interconversion. Its function is as follows. Catalyzes the oxidation of 5,10-methylenetetrahydrofolate to 5,10-methenyltetrahydrofolate and then the hydrolysis of 5,10-methenyltetrahydrofolate to 10-formyltetrahydrofolate. This chain is Bifunctional protein FolD, found in Ligilactobacillus salivarius (strain UCC118) (Lactobacillus salivarius).